Consider the following 367-residue polypeptide: NADH-quinone oxidoreductase subunit D (367 aa).

This sequence belongs to the complex I 49 kDa subunit family. In terms of assembly, NDH-1 is composed of 14 different subunits. Subunits NuoB, C, D, E, F, and G constitute the peripheral sector of the complex.

It localises to the cell inner membrane. The enzyme catalyses a quinone + NADH + 5 H(+)(in) = a quinol + NAD(+) + 4 H(+)(out). NDH-1 shuttles electrons from NADH, via FMN and iron-sulfur (Fe-S) centers, to quinones in the respiratory chain. The immediate electron acceptor for the enzyme in this species is believed to be ubiquinone. Couples the redox reaction to proton translocation (for every two electrons transferred, four hydrogen ions are translocated across the cytoplasmic membrane), and thus conserves the redox energy in a proton gradient. The sequence is that of NADH-quinone oxidoreductase subunit D from Thermosipho melanesiensis (strain DSM 12029 / CIP 104789 / BI429).